Here is an 88-residue protein sequence, read N- to C-terminus: ATP synthase F(0) complex subunit f, mitochondrial (88 aa).

An N-acetylalanine modification is found at alanine 2. A Phosphoserine modification is found at serine 3. Lysine 16 is modified (N6-acetyllysine). The helical transmembrane segment at 62–79 threads the bilayer; the sequence is MVLAAYVFLNYCRSYKEL.

As to quaternary structure, component of the ATP synthase complex composed at least of ATP5F1A/subunit alpha, ATP5F1B/subunit beta, ATP5MC1/subunit c (homooctomer), MT-ATP6/subunit a, MT-ATP8/subunit 8, ATP5ME/subunit e, ATP5MF/subunit f, ATP5MG/subunit g, ATP5MK/subunit k, ATP5MJ/subunit j, ATP5F1C/subunit gamma, ATP5F1D/subunit delta, ATP5F1E/subunit epsilon, ATP5PF/subunit F6, ATP5PB/subunit b, ATP5PD/subunit d, ATP5PO/subunit OSCP. ATP synthase complex consists of a soluble F(1) head domain (subunits alpha(3) and beta(3)) - the catalytic core - and a membrane F(0) domain - the membrane proton channel (subunits c, a, 8, e, f, g, k and j). These two domains are linked by a central stalk (subunits gamma, delta, and epsilon) rotating inside the F1 region and a stationary peripheral stalk (subunits F6, b, d, and OSCP).

Its subcellular location is the mitochondrion. The protein resides in the mitochondrion inner membrane. Subunit f, of the mitochondrial membrane ATP synthase complex (F(1)F(0) ATP synthase or Complex V) that produces ATP from ADP in the presence of a proton gradient across the membrane which is generated by electron transport complexes of the respiratory chain. ATP synthase complex consist of a soluble F(1) head domain - the catalytic core - and a membrane F(1) domain - the membrane proton channel. These two domains are linked by a central stalk rotating inside the F(1) region and a stationary peripheral stalk. During catalysis, ATP synthesis in the catalytic domain of F(1) is coupled via a rotary mechanism of the central stalk subunits to proton translocation. In vivo, can only synthesize ATP although its ATP hydrolase activity can be activated artificially in vitro. Part of the complex F(0) domain. The chain is ATP synthase F(0) complex subunit f, mitochondrial from Bos taurus (Bovine).